The sequence spans 268 residues: Small ribosomal subunit protein uS3 (268 aa).

The KH type-2 domain occupies 38 to 106 (IRKLLATGME…QVQLNILEVK (69 aa)). The tract at residues 217-268 (NTAAPAGDRPRRERPSRPRRSGATGTTATSTEAGRAATATADAPATEQNQEG) is disordered. Low complexity predominate over residues 237–268 (SGATGTTATSTEAGRAATATADAPATEQNQEG).

The protein belongs to the universal ribosomal protein uS3 family. In terms of assembly, part of the 30S ribosomal subunit. Forms a tight complex with proteins S10 and S14.

Binds the lower part of the 30S subunit head. Binds mRNA in the 70S ribosome, positioning it for translation. This chain is Small ribosomal subunit protein uS3, found in Rhodococcus erythropolis (strain PR4 / NBRC 100887).